The primary structure comprises 144 residues: Snaclec 6 (144 aa).

An N-terminal signal peptide occupies residues 1-23 (MGRFISVSFGLLVVFLSLSGTGA). Disulfide bonds link Cys25-Cys36, Cys53-Cys142, and Cys119-Cys134. The C-type lectin domain occupies 32–143 (HEGHCYKVFK…CNFIAPVVCK (112 aa)).

It belongs to the snaclec family. As to quaternary structure, heterodimer; disulfide-linked.

It localises to the secreted. In terms of biological role, interferes with one step of hemostasis (modulation of platelet aggregation, or coagulation cascade, for example). The protein is Snaclec 6 of Daboia siamensis (Eastern Russel's viper).